The sequence spans 277 residues: Putative phosphoenolpyruvate synthase regulatory protein (277 aa).

157 to 164 (GVSRCGKT) contacts ADP.

It belongs to the pyruvate, phosphate/water dikinase regulatory protein family. PSRP subfamily.

It carries out the reaction [pyruvate, water dikinase] + ADP = [pyruvate, water dikinase]-phosphate + AMP + H(+). The catalysed reaction is [pyruvate, water dikinase]-phosphate + phosphate + H(+) = [pyruvate, water dikinase] + diphosphate. Functionally, bifunctional serine/threonine kinase and phosphorylase involved in the regulation of the phosphoenolpyruvate synthase (PEPS) by catalyzing its phosphorylation/dephosphorylation. The protein is Putative phosphoenolpyruvate synthase regulatory protein of Enterobacter sp. (strain 638).